The chain runs to 601 residues: CDPK-related kinase 5 (601 aa).

Residues 1 to 19 show a composition bias toward polar residues; the sequence is MGLCTSKPNSSNSDQTPAR. 2 disordered regions span residues 1–55 and 70–98; these read MGLC…KSPF and KKTPARSPATNSTNSTPKRFFKRPFPPPS. Residue glycine 2 is the site of N-myristoyl glycine attachment. Over residues 26–35 the composition is skewed to low complexity; sequence SESVKPSSSS. The span at 36-48 shows a compositional bias: polar residues; that stretch reads VNGEDQCVTTTNN. Positions 148–410 constitute a Protein kinase domain; it reads YELGDEVGRG…AAQALSHPWI (263 aa). ATP is bound by residues 154–162 and lysine 180; that span reads VGRGHFGYT. Catalysis depends on aspartate 276, which acts as the Proton acceptor. Serine 316 is modified (phosphoserine). An autoinhibitory domain region spans residues 415 to 445; that stretch reads DAKVPMDILVFKLMRAYLRSSSLRKAALRAL. The interval 434–454 is calmodulin binding (CaMBD); sequence SSSLRKAALRALSKTLTVDEL. EF-hand domains are found at residues 452–488, 489–524, 525–564, and 567–596; these read DELFYLREQFALLEPSKNGTISLENIKSALMKMATDA, MKDSRIPEFLGQLSALQYRRMDFEEFCAAALSVHQL, EALDRWEQHARCAYELFEKEGNRPIMIDELASELGLGPSV, and HAVLHDWLRHTDGKLSFLGFVKLLHGVSSR. Ca(2+) is bound by residues serine 467, asparagine 469, threonine 471, asparagine 476, arginine 508, glutamate 513, asparagine 546, glutamate 553, aspartate 578, and lysine 580. The residue at position 582 (serine 582) is a Phosphoserine.

This sequence belongs to the protein kinase superfamily. Ser/Thr protein kinase family. CDPK subfamily. As to quaternary structure, binds calmodulin (CaM) in a calcium-dependent manner.

It is found in the membrane. It carries out the reaction L-seryl-[protein] + ATP = O-phospho-L-seryl-[protein] + ADP + H(+). The enzyme catalyses L-threonyl-[protein] + ATP = O-phospho-L-threonyl-[protein] + ADP + H(+). Its activity is regulated as follows. Activated by calcium and calmodulin. Autophosphorylation may play an important role in the regulation of the kinase activity. May play a role in signal transduction pathways that involve calcium as a second messenger. This is CDPK-related kinase 5 (CRK5) from Arabidopsis thaliana (Mouse-ear cress).